Here is a 421-residue protein sequence, read N- to C-terminus: Lipid II:glycine glycyltransferase (421 aa).

The protein belongs to the FemABX family. Monomer.

It is found in the cytoplasm. It catalyses the reaction beta-D-GlcNAc-(1-&gt;4)-Mur2Ac(oyl-L-Ala-D-isoglutaminyl-L-Lys-D-Ala-D-Ala)-di-trans,octa-cis-undecaprenyl diphosphate + glycyl-tRNA(Gly) = beta-D-GlcNAc-(1-&gt;4)-Mur2Ac(oyl-L-Ala-D-isoglutaminyl-L-Lys-(N(6)-Gly)-D-Ala-D-Ala)-di-trans,octa-cis-undecaprenyl diphosphate + tRNA(Gly) + H(+). Catalyzes the incorporation of the first glycine of the pentaglycine interpeptide bridge, which is characteristic of the S.aureus peptidoglycan. This glycine is added to the epsilon-amino group of the L-lysine of the membrane-bound lipid II intermediate (GlcNAc-(beta-1,4)-N-acetylmuramic acid(-L-Ala-D-iGln-L-Lys-D-Ala-D-Ala)-pyrophosphoryl-undecaprenol), using glycyl-tRNA(Gly) as donor, in a ribosome-independent mechanism. Involved in methicillin resistance. The protein is Lipid II:glycine glycyltransferase (femX) of Staphylococcus aureus (strain USA300).